A 474-amino-acid polypeptide reads, in one-letter code: Glycogen synthase (474 aa).

Position 12 (K12) interacts with ADP-alpha-D-glucose.

The protein belongs to the glycosyltransferase 1 family. Bacterial/plant glycogen synthase subfamily.

It catalyses the reaction [(1-&gt;4)-alpha-D-glucosyl](n) + ADP-alpha-D-glucose = [(1-&gt;4)-alpha-D-glucosyl](n+1) + ADP + H(+). It functions in the pathway glycan biosynthesis; glycogen biosynthesis. Functionally, synthesizes alpha-1,4-glucan chains using ADP-glucose. The sequence is that of Glycogen synthase from Xanthomonas axonopodis pv. citri (strain 306).